Here is a 621-residue protein sequence, read N- to C-terminus: MAAAAVDSAMEVVPALAEEAAPEVAGLSCLVNLPGEVLEYILCCGSLTAADIGRVSSTCRRLRELCQSSGKVWKEQFRVRWPSLMKHYSPTDYVNWLEEYKVRQKAGLEARKIVASFSKRFFSEHVPCNGFSDIENLEGPEIFFEDELVCILNMEGRKALTWKYYAKKILYYLRQQKILNNLKAFLQQPDDYESYLEGAVYIDQYCNPLSDISLKDIQAQIDSIVELVCKTLRGINSRHPSLAFKAGESSMIVEIELQSQVLDAMNYVLYDQLKFQGNRMDYYNALNLYMHQVLIRRTGIPISMSLLYLTIARQLGVPLEPVNFPSHFLLRWCQGAEGATLDIFDYIYIDAFGKGKQLTVKECEYLIGQHVTAALYGVVNVKKVLQRMVGNLLSLGKREGIDQSYQLLRDSLDLYLAMYPDQVQLLLLQARLYFHLGIWPEKVLDILQHIQTLDPGQHGAVGYLVQHTLEHIERKKEEVGVEVKLRSDEKHRDVCYSIGLIMKHKRYGYNCVIYGWDPTCMMGHEWIRNMNVHSLPHGHHQPFYNVLVEDGSCRYAAQENLEYNVEPQEISHPDVGRYFSEFTGTHYIPNAELEIRYPEDLEFVYETVQNIYSAKKENIDE.

Positions 28–77 (SCLVNLPGEVLEYILCCGSLTAADIGRVSSTCRRLRELCQSSGKVWKEQF) constitute an F-box domain.

In terms of assembly, interacts with SKP1 and CUL1.

Substrate-recognition component of the SCF (SKP1-CUL1-F-box protein)-type E3 ubiquitin ligase complex. In Pongo abelii (Sumatran orangutan), this protein is F-box only protein 21 (FBXO21).